The primary structure comprises 309 residues: uncharacterized protein (309 aa).

The segment at 272 to 291 is disordered; it reads PSLDAPSETVEAFPEPQKNL.

This is an uncharacterized protein from Bacillus subtilis (strain 168).